A 130-amino-acid polypeptide reads, in one-letter code: DUF35 domain-containing scaffold protein (130 aa).

Positions 20, 23, 34, and 37 each coordinate Zn(2+).

It belongs to the scaffold protein DUF35 family. In terms of assembly, interacts with acetoacetyl-CoA thiolase and HMG-CoA synthase (HMGCS) that catalyzes the first and second step in the mevalonate pathway, respectively.

In terms of biological role, functions as a scaffold to connect the acetoacetyl-CoA thiolase and HMG-CoA synthase (HMGCS) dimers in the channeling thiolase/HMGCS complex, which allows for efficient coupling of the endergonic thiolase reaction with the exergonic HMGCS reaction. This chain is DUF35 domain-containing scaffold protein, found in Methanothermococcus thermolithotrophicus (Methanococcus thermolithotrophicus).